Consider the following 607-residue polypeptide: Threonine--tRNA ligase (607 aa).

A catalytic region spans residues 200–502 (DHRKLGRELG…LIEEYAGDFP (303 aa)). 3 residues coordinate Zn(2+): cysteine 299, histidine 350, and histidine 479.

It belongs to the class-II aminoacyl-tRNA synthetase family. Homodimer. Requires Zn(2+) as cofactor.

Its subcellular location is the cytoplasm. It catalyses the reaction tRNA(Thr) + L-threonine + ATP = L-threonyl-tRNA(Thr) + AMP + diphosphate + H(+). Catalyzes the attachment of threonine to tRNA(Thr) in a two-step reaction: L-threonine is first activated by ATP to form Thr-AMP and then transferred to the acceptor end of tRNA(Thr). Also edits incorrectly charged L-seryl-tRNA(Thr). This is Threonine--tRNA ligase from Synechococcus sp. (strain ATCC 27144 / PCC 6301 / SAUG 1402/1) (Anacystis nidulans).